Consider the following 360-residue polypeptide: Phospho-N-acetylmuramoyl-pentapeptide-transferase (360 aa).

The next 10 membrane-spanning stretches (helical) occupy residues 25 to 45, 73 to 93, 97 to 117, 134 to 154, 168 to 188, 199 to 219, 236 to 256, 263 to 283, 288 to 308, and 338 to 358; these read RGIL…PWMI, TMGG…WADL, YVWV…VDDY, YFWQ…TAPT, VTIP…VGSS, GLAI…CYLS, SGEL…FLWF, VFMG…IAVI, IVLF…VIQV, and VIVR…ATLK.

It belongs to the glycosyltransferase 4 family. MraY subfamily. Mg(2+) serves as cofactor.

Its subcellular location is the cell inner membrane. It catalyses the reaction UDP-N-acetyl-alpha-D-muramoyl-L-alanyl-gamma-D-glutamyl-meso-2,6-diaminopimeloyl-D-alanyl-D-alanine + di-trans,octa-cis-undecaprenyl phosphate = di-trans,octa-cis-undecaprenyl diphospho-N-acetyl-alpha-D-muramoyl-L-alanyl-D-glutamyl-meso-2,6-diaminopimeloyl-D-alanyl-D-alanine + UMP. Its pathway is cell wall biogenesis; peptidoglycan biosynthesis. Functionally, catalyzes the initial step of the lipid cycle reactions in the biosynthesis of the cell wall peptidoglycan: transfers peptidoglycan precursor phospho-MurNAc-pentapeptide from UDP-MurNAc-pentapeptide onto the lipid carrier undecaprenyl phosphate, yielding undecaprenyl-pyrophosphoryl-MurNAc-pentapeptide, known as lipid I. In Pseudomonas putida (strain ATCC 700007 / DSM 6899 / JCM 31910 / BCRC 17059 / LMG 24140 / F1), this protein is Phospho-N-acetylmuramoyl-pentapeptide-transferase.